The following is a 423-amino-acid chain: SH2 domain-containing protein 5 (423 aa).

The PID domain maps to 28 to 146 (AQYVGLLPCG…LLCRSFQLAY (119 aa)). Residues 296–392 (WAFAGISRPC…LDMGRLNPTY (97 aa)) form the SH2 domain. A disordered region spans residues 394 to 423 (EQDCGPLGRPPRTLRPLSHAKSEAELQGLG). Low complexity predominate over residues 398–410 (GPLGRPPRTLRPL).

In terms of assembly, interacts with BCR.

It localises to the postsynaptic density. May be involved in synaptic plasticity regulation through the control of Rac-GTP levels. This chain is SH2 domain-containing protein 5, found in Pongo abelii (Sumatran orangutan).